The primary structure comprises 667 residues: Alpha-1,4-glucan:maltose-1-phosphate maltosyltransferase (667 aa).

Alpha-maltose 1-phosphate-binding residues include K261, Q321, and D356. The active-site Nucleophile is the D392. N393 lines the alpha-maltose 1-phosphate pocket. E421 serves as the catalytic Proton donor. 534–535 (KY) serves as a coordination point for alpha-maltose 1-phosphate.

Belongs to the glycosyl hydrolase 13 family. GlgE subfamily. Homodimer.

The catalysed reaction is alpha-maltose 1-phosphate + [(1-&gt;4)-alpha-D-glucosyl](n) = [(1-&gt;4)-alpha-D-glucosyl](n+2) + phosphate. Maltosyltransferase that uses maltose 1-phosphate (M1P) as the sugar donor to elongate linear or branched alpha-(1-&gt;4)-glucans. Is involved in a branched alpha-glucan biosynthetic pathway from trehalose, together with TreS, Mak and GlgB. This is Alpha-1,4-glucan:maltose-1-phosphate maltosyltransferase from Methylacidiphilum infernorum (isolate V4) (Methylokorus infernorum (strain V4)).